We begin with the raw amino-acid sequence, 457 residues long: Acetylcholine receptor subunit alpha (457 aa).

Positions 1 to 20 (MELTAVLLLLGLCSAGTVLG) are cleaved as a signal peptide. Residues 21–230 (SEHETRLVAK…ITYHFVMQRL (210 aa)) lie on the Extracellular side of the membrane. 2 cysteine pairs are disulfide-bonded: cysteine 148-cysteine 162 and cysteine 212-cysteine 213. N-linked (GlcNAc...) asparagine glycosylation is present at asparagine 161. 3 helical membrane passes run 231–255 (PLYFIVNVIIPCLLFSFLTSLVFYL), 263–281 (MTLSISVLLSLTVFLLVIV), and 297–316 (YMLFTMVFVIASIIITVIVI). The Cytoplasmic portion of the chain corresponds to 317-428 (NTHHRSPSTH…WKYVAMVMDH (112 aa)). Residues 429–447 (ILLGVFMLVCLIGTLAVFA) traverse the membrane as a helical segment.

This sequence belongs to the ligand-gated ion channel (TC 1.A.9) family. Acetylcholine receptor (TC 1.A.9.1) subfamily. Alpha-1/CHRNA1 sub-subfamily. In terms of assembly, one of the alpha chains that assemble within the acetylcholine receptor, a pentamer of two alpha chains, a beta, a delta, and a gamma (in immature muscle) or epsilon (in mature muscle) chains. The muscle heteropentamer composed of alpha-1, beta-1, delta, epsilon subunits interacts with the alpha-conotoxin ImII.

The protein resides in the postsynaptic cell membrane. It is found in the cell membrane. It carries out the reaction K(+)(in) = K(+)(out). It catalyses the reaction Na(+)(in) = Na(+)(out). In terms of biological role, upon acetylcholine binding, the AChR responds by an extensive change in conformation that affects all subunits and leads to opening of an ion-conducting channel across the plasma membrane. This chain is Acetylcholine receptor subunit alpha (Chrna1), found in Rattus norvegicus (Rat).